A 95-amino-acid polypeptide reads, in one-letter code: Protein TusB (95 aa).

It belongs to the DsrH/TusB family. Heterohexamer, formed by a dimer of trimers. The hexameric TusBCD complex contains 2 copies each of TusB, TusC and TusD. The TusBCD complex interacts with TusE.

It is found in the cytoplasm. Its function is as follows. Part of a sulfur-relay system required for 2-thiolation of 5-methylaminomethyl-2-thiouridine (mnm(5)s(2)U) at tRNA wobble positions. In Escherichia coli (strain SMS-3-5 / SECEC), this protein is Protein TusB.